Reading from the N-terminus, the 129-residue chain is Small ribosomal subunit protein uS11 (129 aa).

It belongs to the universal ribosomal protein uS11 family. In terms of assembly, part of the 30S ribosomal subunit. Interacts with proteins S7 and S18. Binds to IF-3.

Located on the platform of the 30S subunit, it bridges several disparate RNA helices of the 16S rRNA. Forms part of the Shine-Dalgarno cleft in the 70S ribosome. This Anoxybacillus flavithermus (strain DSM 21510 / WK1) protein is Small ribosomal subunit protein uS11.